A 405-amino-acid polypeptide reads, in one-letter code: Pyruvate decarboxylase 2 (405 aa).

The thiamine pyrophosphate binding stretch occupies residues 232–314; it reads DSWFNCQKLK…FLINNGGYTI (83 aa). Mg(2+) contacts are provided by D282, N309, and G311. E315 provides a ligand contact to substrate.

This sequence belongs to the TPP enzyme family. Homotetramer. It depends on a metal cation as a cofactor. The cofactor is thiamine diphosphate.

The catalysed reaction is a 2-oxocarboxylate + H(+) = an aldehyde + CO2. The chain is Pyruvate decarboxylase 2 (PDC2) from Pisum sativum (Garden pea).